The chain runs to 466 residues: Cysteine--tRNA ligase (466 aa).

Cysteine 28 lines the Zn(2+) pocket. Residues 30–40 (PTVYNYIHIGN) carry the 'HIGH' region motif. Zn(2+) contacts are provided by cysteine 208, histidine 233, and glutamate 237. The 'KMSKS' region signature appears at 265 to 269 (KMSKS). Position 268 (lysine 268) interacts with ATP.

The protein belongs to the class-I aminoacyl-tRNA synthetase family. As to quaternary structure, monomer. Zn(2+) serves as cofactor.

It is found in the cytoplasm. The enzyme catalyses tRNA(Cys) + L-cysteine + ATP = L-cysteinyl-tRNA(Cys) + AMP + diphosphate. The sequence is that of Cysteine--tRNA ligase from Staphylococcus aureus (strain MSSA476).